Consider the following 545-residue polypeptide: Methionine--tRNA ligase (545 aa).

Residues 10–20 carry the 'HIGH' region motif; it reads PYANGSLHIGH. Residues Cys141, Cys144, Cys153, and Cys156 each contribute to the Zn(2+) site. The 'KMSKS' region signature appears at 329-333; the sequence is KISTS. Thr332 serves as a coordination point for ATP.

This sequence belongs to the class-I aminoacyl-tRNA synthetase family. MetG type 1 subfamily. Monomer. Zn(2+) serves as cofactor.

The protein resides in the cytoplasm. The enzyme catalyses tRNA(Met) + L-methionine + ATP = L-methionyl-tRNA(Met) + AMP + diphosphate. Its function is as follows. Is required not only for elongation of protein synthesis but also for the initiation of all mRNA translation through initiator tRNA(fMet) aminoacylation. This is Methionine--tRNA ligase from Streptococcus pneumoniae (strain 70585).